The primary structure comprises 256 residues: MITLTTDFGLKGPYVGEMKVAMLRINPNAKIVDVTHSVTRHSILEGSFVMEQVVKYSPKGTVHVGVIDPGVGTERRAIVIEGDQYLVVPDNGLATLPLKHIKVKSVYEIIPDKIRKFTGWEISSTFHGRDIFGPAGALIEKGIHPEEFGREIPVDSIVKLNVEPRKEGDVWILKVIYIDDFGNVILNLENYEKPRTVELLDFNLRLPYLETYGLVEKGEMLALPGSHDYLEIAVNMGSAAERLNVKVGDELRVRLL.

Adenosine is bound by residues aspartate 7, histidine 41, aspartate 68, and asparagine 183. Asparagine 183, tyrosine 212, serine 226, glutamate 231, valine 234, and methionine 236 together coordinate (R)-S-adenosyl-L-methionine. Valine 234 lines the adenosine pocket.

Belongs to the SAM hydrolase / SAM-dependent halogenase family. As to quaternary structure, homotrimer.

It catalyses the reaction (R)-S-adenosyl-L-methionine + H2O = adenosine + L-methionine + H(+). In terms of biological role, catalyzes the hydrolysis of S-adenosyl-L-methionine (SAM) into adenosine and L-methionine. Is likely stereoselective, specifically hydrolyzing (R)-S-adenosyl-L-methionine ((R)-SAM), the inactive form of the ubiquitous cofactor SAM, and not the active form of SAM, (S)-S-adenosyl-L-methionine. Probaly plays a role in preventing accumulation of (R)-S-adenosyl-L-methionine in cells; maintenance of (S)-S-denosyl-L-methionine homochirality is important for cellular health given that the (R)-form is largely inactive as a methyl donor and can function as an inhibitor of methyltransferases. Is unable to mediate a fluorination or chlorination reaction with SAM. In Pyrococcus horikoshii (strain ATCC 700860 / DSM 12428 / JCM 9974 / NBRC 100139 / OT-3), this protein is (R)-S-adenosyl-L-methionine hydrolase.